We begin with the raw amino-acid sequence, 400 residues long: Acetylornithine aminotransferase (400 aa).

Residues Gly106–Ala107 and Phe132 contribute to the pyridoxal 5'-phosphate site. Position 135 (Arg135) interacts with N(2)-acetyl-L-ornithine. Asp217–Gln220 serves as a coordination point for pyridoxal 5'-phosphate. Position 246 is an N6-(pyridoxal phosphate)lysine (Lys246). Ser274 is a N(2)-acetyl-L-ornithine binding site. Pyridoxal 5'-phosphate is bound at residue Thr275.

It belongs to the class-III pyridoxal-phosphate-dependent aminotransferase family. ArgD subfamily. As to quaternary structure, homodimer. Pyridoxal 5'-phosphate serves as cofactor.

Its subcellular location is the cytoplasm. The catalysed reaction is N(2)-acetyl-L-ornithine + 2-oxoglutarate = N-acetyl-L-glutamate 5-semialdehyde + L-glutamate. The protein operates within amino-acid biosynthesis; L-arginine biosynthesis; N(2)-acetyl-L-ornithine from L-glutamate: step 4/4. The polypeptide is Acetylornithine aminotransferase (Streptomyces clavuligerus).